A 257-amino-acid polypeptide reads, in one-letter code: Ribonuclease PH (257 aa).

Phosphate is bound by residues Arg-86 and 124–126 (GTR).

The protein belongs to the RNase PH family. Homohexameric ring arranged as a trimer of dimers.

It catalyses the reaction tRNA(n+1) + phosphate = tRNA(n) + a ribonucleoside 5'-diphosphate. Phosphorolytic 3'-5' exoribonuclease that plays an important role in tRNA 3'-end maturation. Removes nucleotide residues following the 3'-CCA terminus of tRNAs; can also add nucleotides to the ends of RNA molecules by using nucleoside diphosphates as substrates, but this may not be physiologically important. Probably plays a role in initiation of 16S rRNA degradation (leading to ribosome degradation) during starvation. The protein is Ribonuclease PH of Sulfurihydrogenibium sp. (strain YO3AOP1).